A 402-amino-acid polypeptide reads, in one-letter code: Arginine deiminase (402 aa).

Residue Cys392 is the Amidino-cysteine intermediate of the active site.

The protein belongs to the arginine deiminase family.

Its subcellular location is the cytoplasm. The enzyme catalyses L-arginine + H2O = L-citrulline + NH4(+). The protein operates within amino-acid degradation; L-arginine degradation via ADI pathway; carbamoyl phosphate from L-arginine: step 1/2. The chain is Arginine deiminase from Mycolicibacterium gilvum (strain PYR-GCK) (Mycobacterium gilvum (strain PYR-GCK)).